The following is a 446-amino-acid chain: Mitochondrial distribution and morphology protein 12 (446 aa).

Positions 1 to 446 constitute an SMP-LTD domain; the sequence is MSIDINWEAA…VYPSFWTFLV (446 aa). The segment covering 75-85 has biased composition (acidic residues); it reads DNEIGDGEVSD. Disordered regions lie at residues 75-106, 126-145, and 188-283; these read DNEI…SAAD, PHDV…PIRS, and TPLS…RVRE. Residues 126 to 138 show a composition bias toward basic and acidic residues; that stretch reads PHDVPIPSKEDPL. Polar residues predominate over residues 233–246; the sequence is TGNSRPSTADTLDS. Over residues 260–274 the composition is skewed to basic and acidic residues; that stretch reads SSDDAHPNVLPRRDN.

The protein belongs to the MDM12 family. In terms of assembly, component of the ER-mitochondria encounter structure (ERMES) or MDM complex, composed of MMM1, MDM10, MDM12 and MDM34. An MMM1 homodimer associates with one molecule of MDM12 on each side in a pairwise head-to-tail manner, and the SMP-LTD domains of MMM1 and MDM12 generate a continuous hydrophobic tunnel for phospholipid trafficking.

It is found in the mitochondrion outer membrane. It localises to the endoplasmic reticulum membrane. Its function is as follows. Component of the ERMES/MDM complex, which serves as a molecular tether to connect the endoplasmic reticulum (ER) and mitochondria. Components of this complex are involved in the control of mitochondrial shape and protein biogenesis, and function in nonvesicular lipid trafficking between the ER and mitochondria. MDM12 is required for the interaction of the ER-resident membrane protein MMM1 and the outer mitochondrial membrane-resident beta-barrel protein MDM10. The MDM12-MMM1 subcomplex functions in the major beta-barrel assembly pathway that is responsible for biogenesis of all mitochondrial outer membrane beta-barrel proteins, and acts in a late step after the SAM complex. The MDM10-MDM12-MMM1 subcomplex further acts in the TOM40-specific pathway after the action of the MDM12-MMM1 complex. Essential for establishing and maintaining the structure of mitochondria and maintenance of mtDNA nucleoids. In Coccidioides immitis (strain RS) (Valley fever fungus), this protein is Mitochondrial distribution and morphology protein 12.